We begin with the raw amino-acid sequence, 140 residues long: MATPIRTVRQLSESLCIPYIDVLLPCNFCNYFLSNAEKLLFDHFDLHLVWRDNLVFGCCQGCARTVSLLEFVLYYQESYEVPEIEEILDRPLLQIELRCVTCIKKLSVAEKLEVVSNGERVHRVRNRLKAKCSLCRLYAI.

Zinc fingers lie at residues 26–62 and 99–135; these read CNFC…CQGC and CVTC…CSLC.

The protein belongs to the papillomaviridae E6 protein family. Forms homodimers. Interacts with ubiquitin-protein ligase UBE3A/E6-AP; this interaction stimulates UBE3A ubiquitin activity. Interacts with host BAK1.

It is found in the host cytoplasm. The protein resides in the host nucleus. Functionally, plays a major role in the induction and maintenance of cellular transformation. E6 associates with host UBE3A/E6-AP ubiquitin-protein ligase and modulates its activity. Protects host keratinocytes from apoptosis by mediating the degradation of host BAK1. May also inhibit host immune response. In Human papillomavirus type 1 (Human papillomavirus type 1a), this protein is Protein E6.